The chain runs to 370 residues: Cap-specific mRNA (nucleoside-2'-O-)-methyltransferase 1 (370 aa).

In terms of domain architecture, RrmJ-type SAM-dependent 2'-O-MTase spans 87 to 294; sequence AFRNRAGHKL…ERYLVCIGFI (208 aa). Positions 130 and 207 each coordinate S-adenosyl-L-methionine. The Proton acceptor role is filled by lysine 248.

Component of a complex composed of CBF5, GAR1, NHP2, MTR1, NOP10 and Tb11.01.8210.

The protein resides in the nucleus. It catalyses the reaction a 5'-end (N(7)-methyl 5'-triphosphoguanosine)-ribonucleoside in mRNA + S-adenosyl-L-methionine = a 5'-end (N(7)-methyl 5'-triphosphoguanosine)-(2'-O-methyl-ribonucleoside) in mRNA + S-adenosyl-L-homocysteine + H(+). Functionally, S-adenosyl-L-methionine-dependent methyltransferase that mediates RNA cap1 2'-O-ribose methylation to the 5'-cap structure of spliced leader and U1 small nuclear RNAs. Methylates the ribose of the first nucleotide of a m(7)GpppG-capped RNA to produce m(7)GpppNmp (cap1). Cap1 modification is linked to higher levels of translation. Recognizes a guanosine cap on RNA independent of its N(7) methylation status. This is Cap-specific mRNA (nucleoside-2'-O-)-methyltransferase 1 (MTR1) from Trypanosoma brucei brucei (strain 927/4 GUTat10.1).